We begin with the raw amino-acid sequence, 206 residues long: Probable N-acetyltransferase 14 (206 aa).

Positions 6-206 (LSVREMREDE…TLVREFSKDL (201 aa)) constitute an N-acetyltransferase domain. The chain crosses the membrane as a helical span at residues 57–77 (FVLASFALALLLPVFLAVAAV).

Belongs to the camello family. In terms of tissue distribution, expressed in K-562 and HeLa cell lines and in brain.

The protein resides in the membrane. Its function is as follows. Probable acetyltransferase. May act as a transcription factor that regulates the expression of coproporphyrinogen oxidase by binding to a promoter regulatory element. This is Probable N-acetyltransferase 14 (NAT14) from Homo sapiens (Human).